Here is a 272-residue protein sequence, read N- to C-terminus: Protein UL24 homolog (272 aa).

Belongs to the herpesviridae UL24 family.

The protein localises to the virion. The protein resides in the host cytoplasm. It localises to the host nucleus. It is found in the host nucleolus. Its subcellular location is the host Golgi apparatus. Functionally, may participate in nuclear egress of viral particles. Plays a role in the dispersal of several host nucleolar proteins including NCL/nucleolin and NPM1. Since deletion of host NCL/nucleolin negatively impact on nuclear egress, UL24 supposedly acts on this process through its effect on host nucleoli. This is Protein UL24 homolog from Equine herpesvirus 1 (strain V592) (EHV-1).